We begin with the raw amino-acid sequence, 156 residues long: Putative pre-16S rRNA nuclease (156 aa).

It belongs to the YqgF nuclease family.

Its subcellular location is the cytoplasm. In terms of biological role, could be a nuclease involved in processing of the 5'-end of pre-16S rRNA. This Ehrlichia ruminantium (strain Gardel) protein is Putative pre-16S rRNA nuclease.